The sequence spans 299 residues: CCR4-NOT transcription complex subunit 9 (299 aa).

Belongs to the CNOT9 family. In terms of assembly, homodimer. Component of the CCR4-NOT complex.

It localises to the nucleus. Its subcellular location is the cytoplasm. The protein localises to the P-body. Functionally, component of the CCR4-NOT complex which is one of the major cellular mRNA deadenylases and is linked to various cellular processes including bulk mRNA degradation, miRNA-mediated repression, translational repression during translational initiation and general transcription regulation. Additional complex functions may be a consequence of its influence on mRNA expression. Involved in down-regulation of MYB- and JUN-dependent transcription. Enhances ligand-dependent transcriptional activity of nuclear hormone receptors. May play a role in cell differentiation. In Xenopus tropicalis (Western clawed frog), this protein is CCR4-NOT transcription complex subunit 9.